The chain runs to 526 residues: Cyclin-L1 (526 aa).

Positions 1-36 are disordered; the sequence is MASGPHSTATAAAAASSAAPSAGGSSSGTTTTTTTT. 2 cyclin-like regions span residues 88–190 and 203–287; these read ELIQ…RVLK and KIIV…ETLR. The tract at residues 318 to 526 is disordered; that stretch reads KGLNPDGTPA…SRSGHGRHRR (209 aa). Threonine 325 carries the post-translational modification Phosphothreonine. Residues serine 335 and serine 338 each carry the phosphoserine modification. Residues lysine 339 and lysine 347 each participate in a glycyl lysine isopeptide (Lys-Gly) (interchain with G-Cter in SUMO2) cross-link. The span at 342–352 shows a compositional bias: basic and acidic residues; that stretch reads SPREVKAEEKS. Phosphoserine is present on residues serine 352 and serine 355. Residues 361-370 show a composition bias toward basic and acidic residues; the sequence is VKKEPEDRQQ. Residue lysine 362 forms a Glycyl lysine isopeptide (Lys-Gly) (interchain with G-Cter in SUMO2) linkage. Residue serine 374 is modified to Phosphoserine. Basic residues-rich tracts occupy residues 382–418, 438–452, 460–476, and 486–498; these read DSKR…RRSR, RRHH…KAKH, SNRH…RSQS, and KKHR…HRDR. The tract at residues 390 to 432 is RS; it reads RSASRSRSRTRSRSRSHTPRRHYNNRRSRSGTYSSRSRSRSRS. A Phosphoserine modification is found at serine 445. Residues 499 to 508 show a composition bias toward basic and acidic residues; sequence RERSRSFERS. Residues 509-526 show a composition bias toward basic residues; it reads HKSKHHGGSRSGHGRHRR.

It belongs to the cyclin family. Cyclin L subfamily. As to quaternary structure, (Microbial infection) Interacts with human herpes virus 1 (HHV-1) transcriptional regulator ICP22. Interacts with POLR2A via its hyperphosphorylated C-terminal domain (CTD). Interacts with CDK11A, CDK12 and CDK13. Isoforms 1 and 2, but not isoform 3, interact with CDK11B. May form a ternary complex with CDK11B and casein kinase II (CKII). Interacts with pre-mRNA-splicing factors, including at least SRSF1, SRSF2 and SRSF7/SLU7. Widely expressed. Overexpression in primary tumors of head and neck squamous cell carcinomas (HNSCC).

The protein resides in the nucleus speckle. The protein localises to the nucleus. It localises to the nucleoplasm. Involved in pre-mRNA splicing. Functions in association with cyclin-dependent kinases (CDKs). Inhibited by the CDK-specific inhibitor CDKN1A/p21. May play a role in the regulation of RNA polymerase II (pol II). May be a candidate proto-oncogene in head and neck squamous cell carcinomas (HNSCC). This Homo sapiens (Human) protein is Cyclin-L1 (CCNL1).